A 145-amino-acid chain; its full sequence is D-aminoacyl-tRNA deacylase (145 aa).

Positions G137–P138 match the Gly-cisPro motif, important for rejection of L-amino acids motif.

The protein belongs to the DTD family. As to quaternary structure, homodimer.

Its subcellular location is the cytoplasm. The enzyme catalyses glycyl-tRNA(Ala) + H2O = tRNA(Ala) + glycine + H(+). The catalysed reaction is a D-aminoacyl-tRNA + H2O = a tRNA + a D-alpha-amino acid + H(+). Functionally, an aminoacyl-tRNA editing enzyme that deacylates mischarged D-aminoacyl-tRNAs. Also deacylates mischarged glycyl-tRNA(Ala), protecting cells against glycine mischarging by AlaRS. Acts via tRNA-based rather than protein-based catalysis; rejects L-amino acids rather than detecting D-amino acids in the active site. By recycling D-aminoacyl-tRNA to D-amino acids and free tRNA molecules, this enzyme counteracts the toxicity associated with the formation of D-aminoacyl-tRNA entities in vivo and helps enforce protein L-homochirality. This is D-aminoacyl-tRNA deacylase from Cereibacter sphaeroides (strain KD131 / KCTC 12085) (Rhodobacter sphaeroides).